The chain runs to 356 residues: Uroporphyrinogen decarboxylase (356 aa).

Substrate-binding positions include 23-27 (RQAGR), aspartate 72, tyrosine 148, serine 203, and histidine 321.

This sequence belongs to the uroporphyrinogen decarboxylase family. As to quaternary structure, homodimer.

The protein localises to the cytoplasm. The enzyme catalyses uroporphyrinogen III + 4 H(+) = coproporphyrinogen III + 4 CO2. Its pathway is porphyrin-containing compound metabolism; protoporphyrin-IX biosynthesis; coproporphyrinogen-III from 5-aminolevulinate: step 4/4. Catalyzes the decarboxylation of four acetate groups of uroporphyrinogen-III to yield coproporphyrinogen-III. The sequence is that of Uroporphyrinogen decarboxylase from Chloroflexus aggregans (strain MD-66 / DSM 9485).